The sequence spans 178 residues: Acireductone dioxygenase (178 aa).

Fe(2+) contacts are provided by histidine 81, histidine 83, glutamate 87, and histidine 126. Histidine 81, histidine 83, glutamate 87, and histidine 126 together coordinate Ni(2+).

It belongs to the acireductone dioxygenase (ARD) family. Fe(2+) serves as cofactor. Ni(2+) is required as a cofactor.

The protein resides in the cytoplasm. Its subcellular location is the nucleus. It catalyses the reaction 1,2-dihydroxy-5-(methylsulfanyl)pent-1-en-3-one + O2 = 4-methylsulfanyl-2-oxobutanoate + formate + 2 H(+). It carries out the reaction 1,2-dihydroxy-5-(methylsulfanyl)pent-1-en-3-one + O2 = 3-(methylsulfanyl)propanoate + CO + formate + 2 H(+). It functions in the pathway amino-acid biosynthesis; L-methionine biosynthesis via salvage pathway; L-methionine from S-methyl-5-thio-alpha-D-ribose 1-phosphate: step 5/6. Its function is as follows. Catalyzes 2 different reactions between oxygen and the acireductone 1,2-dihydroxy-3-keto-5-methylthiopentene (DHK-MTPene) depending upon the metal bound in the active site. Fe-containing acireductone dioxygenase (Fe-ARD) produces formate and 2-keto-4-methylthiobutyrate (KMTB), the alpha-ketoacid precursor of methionine in the methionine recycle pathway. Ni-containing acireductone dioxygenase (Ni-ARD) produces methylthiopropionate, carbon monoxide and formate, and does not lie on the methionine recycle pathway. The chain is Acireductone dioxygenase (adi1) from Neurospora crassa (strain ATCC 24698 / 74-OR23-1A / CBS 708.71 / DSM 1257 / FGSC 987).